Reading from the N-terminus, the 229-residue chain is Flagellar L-ring protein (229 aa).

The signal sequence occupies residues 1–25 (MKQVRLLPPAPVRAVCALAVAALAG). Cysteine 26 carries N-palmitoyl cysteine lipidation. Cysteine 26 is lipidated: S-diacylglycerol cysteine.

Belongs to the FlgH family. The basal body constitutes a major portion of the flagellar organelle and consists of four rings (L,P,S, and M) mounted on a central rod.

The protein resides in the cell outer membrane. Its subcellular location is the bacterial flagellum basal body. Assembles around the rod to form the L-ring and probably protects the motor/basal body from shearing forces during rotation. This chain is Flagellar L-ring protein, found in Burkholderia ambifaria (strain ATCC BAA-244 / DSM 16087 / CCUG 44356 / LMG 19182 / AMMD) (Burkholderia cepacia (strain AMMD)).